A 601-amino-acid polypeptide reads, in one-letter code: Phosphomethylpyrimidine synthase (601 aa).

Substrate-binding positions include N224, M253, Y282, H318, S338–G340, D379–R382, and E418. H422 is a binding site for Zn(2+). Y445 provides a ligand contact to substrate. H486 contacts Zn(2+). [4Fe-4S] cluster contacts are provided by C566, C569, and C574.

This sequence belongs to the ThiC family. As to quaternary structure, homodimer. The cofactor is [4Fe-4S] cluster.

It carries out the reaction 5-amino-1-(5-phospho-beta-D-ribosyl)imidazole + S-adenosyl-L-methionine = 4-amino-2-methyl-5-(phosphooxymethyl)pyrimidine + CO + 5'-deoxyadenosine + formate + L-methionine + 3 H(+). The protein operates within cofactor biosynthesis; thiamine diphosphate biosynthesis. Functionally, catalyzes the synthesis of the hydroxymethylpyrimidine phosphate (HMP-P) moiety of thiamine from aminoimidazole ribotide (AIR) in a radical S-adenosyl-L-methionine (SAM)-dependent reaction. This Xylella fastidiosa (strain 9a5c) protein is Phosphomethylpyrimidine synthase.